The primary structure comprises 408 residues: LL-diaminopimelate aminotransferase (408 aa).

2 residues coordinate substrate: Y15 and G42. Residues Y72, 108-109 (SK), Y132, N187, Y218, and 246-248 (SFS) contribute to the pyridoxal 5'-phosphate site. Substrate is bound by residues K109, Y132, and N187. N6-(pyridoxal phosphate)lysine is present on K249. R257 and N292 together coordinate pyridoxal 5'-phosphate. Substrate contacts are provided by N292 and R388.

This sequence belongs to the class-I pyridoxal-phosphate-dependent aminotransferase family. LL-diaminopimelate aminotransferase subfamily. In terms of assembly, homodimer. Pyridoxal 5'-phosphate is required as a cofactor.

The catalysed reaction is (2S,6S)-2,6-diaminopimelate + 2-oxoglutarate = (S)-2,3,4,5-tetrahydrodipicolinate + L-glutamate + H2O + H(+). It participates in amino-acid biosynthesis; L-lysine biosynthesis via DAP pathway; LL-2,6-diaminopimelate from (S)-tetrahydrodipicolinate (aminotransferase route): step 1/1. Functionally, involved in the synthesis of meso-diaminopimelate (m-DAP or DL-DAP), required for both lysine and peptidoglycan biosynthesis. Catalyzes the direct conversion of tetrahydrodipicolinate to LL-diaminopimelate. This is LL-diaminopimelate aminotransferase from Synechococcus sp. (strain CC9902).